A 282-amino-acid polypeptide reads, in one-letter code: Pantothenate synthetase (282 aa).

Residue 26 to 33 (MGNLHDGH) participates in ATP binding. Histidine 33 (proton donor) is an active-site residue. Glutamine 57 is a (R)-pantoate binding site. Glutamine 57 lines the beta-alanine pocket. ATP is bound at residue 148-151 (GKKD). Glutamine 154 lines the (R)-pantoate pocket. 185 to 188 (LSSR) lines the ATP pocket.

This sequence belongs to the pantothenate synthetase family. In terms of assembly, homodimer.

The protein localises to the cytoplasm. It catalyses the reaction (R)-pantoate + beta-alanine + ATP = (R)-pantothenate + AMP + diphosphate + H(+). It participates in cofactor biosynthesis; (R)-pantothenate biosynthesis; (R)-pantothenate from (R)-pantoate and beta-alanine: step 1/1. Functionally, catalyzes the condensation of pantoate with beta-alanine in an ATP-dependent reaction via a pantoyl-adenylate intermediate. The protein is Pantothenate synthetase of Polaromonas sp. (strain JS666 / ATCC BAA-500).